A 670-amino-acid chain; its full sequence is UvrABC system protein B (670 aa).

A Helicase ATP-binding domain is found at 51-433 (DGLKKGEPFQ…SSRVVEQIIR (383 aa)). Position 64 to 71 (64 to 71 (GVTGSGKT)) interacts with ATP. Residues 117–140 (YYDYYQPESYLPAKDQYIEKDAMI) carry the Beta-hairpin motif. A Helicase C-terminal domain is found at 453–612 (DVMQEIRKIV…IVPTTIRKPI (160 aa)). A UVR domain is found at 631 to 666 (PNVIIELDAEMREAADRLDFERAIQVRELIKKLEKE).

Belongs to the UvrB family. In terms of assembly, forms a heterotetramer with UvrA during the search for lesions. Interacts with UvrC in an incision complex.

The protein resides in the cytoplasm. The UvrABC repair system catalyzes the recognition and processing of DNA lesions. A damage recognition complex composed of 2 UvrA and 2 UvrB subunits scans DNA for abnormalities. Upon binding of the UvrA(2)B(2) complex to a putative damaged site, the DNA wraps around one UvrB monomer. DNA wrap is dependent on ATP binding by UvrB and probably causes local melting of the DNA helix, facilitating insertion of UvrB beta-hairpin between the DNA strands. Then UvrB probes one DNA strand for the presence of a lesion. If a lesion is found the UvrA subunits dissociate and the UvrB-DNA preincision complex is formed. This complex is subsequently bound by UvrC and the second UvrB is released. If no lesion is found, the DNA wraps around the other UvrB subunit that will check the other stand for damage. In Methanosarcina mazei (strain ATCC BAA-159 / DSM 3647 / Goe1 / Go1 / JCM 11833 / OCM 88) (Methanosarcina frisia), this protein is UvrABC system protein B.